Reading from the N-terminus, the 312-residue chain is MVGPVRPQIVLFGSSIVQYSFTDRGWGATLADLYSRTADIILRGYAGWNSRFALKVLHQVFPKDAVIQPSLVIVYFGGNDSTHPHPSGHGPHVPLSEFIENMRKIGEHLLSLSDKTRVIFLTPPPMNEKQIEIVFGDAIKGRSNELCRPYAEELLNLCREINVKGIDIWTAIQQQDDWLNSCFTDGIHFTAKASEIVVKEILKVLRGADWKPSLYWKSLPVEFPFDFDAPNSISLHDLELTRNNHFESPHLVSLCEQELTRNEQLEPPHPVSLCDHELTRNEQLEPPHPVSLCDHELTQNEQLEPPQPTARL.

The signal sequence occupies residues 1 to 22 (MVGPVRPQIVLFGSSIVQYSFT). N-linked (GlcNAc...) asparagine glycosylation occurs at Asn79. Residues 285-312 (EPPHPVSLCDHELTQNEQLEPPQPTARL) form a disordered region.

This sequence belongs to the 'GDSL' lipolytic enzyme family.

It is found in the secreted. The protein is GDSL esterase/lipase At2g38180 of Arabidopsis thaliana (Mouse-ear cress).